The following is a 316-amino-acid chain: Apolipoprotein E (316 aa).

The first 18 residues, 1 to 18 (MKVLWVALVVALLAGCQA), serve as a signal peptide directing secretion. Tandem repeats lie at residues 79–100 (VLME…GQLA), 101–122 (PMAQ…ARLG), 123–144 (SDME…AMLG), 145–166 (QSTE…KRLL), 167–188 (RDAD…EGAE), 189–210 (RSVS…SRAA), 211–232 (TLST…QKLH), and 233–254 (GRLE…QQLE). The interval 79-254 (VLMEETMKEV…RLDKMRQQLE (176 aa)) is 8 X 22 AA approximate tandem repeats. A Methionine sulfoxide modification is found at Met-142. Residue Ser-146 is modified to Phosphoserine. An LDL and other lipoprotein receptors binding region spans residues 157–167 (HLRKLRKRLLR). 161 to 164 (LRKR) contacts heparin. The lipid-binding and lipoprotein association stretch occupies residues 209-289 (AATLSTQAAQ…SWFEPLVGDM (81 aa)). A glycan (O-linked (GalNAc...) threonine) is linked at Thr-211. Residue 228-235 (RQKLHGRL) participates in heparin binding. Positions 265–316 (SQIRLQAEAFQARLRSWFEPLVGDMQRQWAGLVEKVQLALHLSPTSPPSENH) are homooligomerization. The interval 277 to 289 (RLRSWFEPLVGDM) is specificity for association with VLDL.

Belongs to the apolipoprotein A1/A4/E family. Homotetramer. May interact with ABCA1; functionally associated with ABCA1 in the biogenesis of HDLs. May interact with APP/A4 amyloid-beta peptide; the interaction is extremely stable in vitro but its physiological significance is unclear. May interact with MAPT. May interact with MAP2. In the cerebrospinal fluid, interacts with secreted SORL1. Interacts with PMEL; this allows the loading of PMEL luminal fragment on ILVs to induce fibril nucleation. In terms of processing, APOE exists as multiple glycosylated and sialylated glycoforms within cells and in plasma. The extent of glycosylation and sialylation are tissue and context specific. Post-translationally, glycated in plasma VLDL. Phosphorylated by FAM20C in the extracellular medium.

The protein localises to the secreted. Its subcellular location is the extracellular space. It localises to the extracellular matrix. It is found in the extracellular vesicle. The protein resides in the endosome. The protein localises to the multivesicular body. APOE is an apolipoprotein, a protein associating with lipid particles, that mainly functions in lipoprotein-mediated lipid transport between organs via the plasma and interstitial fluids. APOE is a core component of plasma lipoproteins and is involved in their production, conversion and clearance. Apolipoproteins are amphipathic molecules that interact both with lipids of the lipoprotein particle core and the aqueous environment of the plasma. As such, APOE associates with chylomicrons, chylomicron remnants, very low density lipoproteins (VLDL) and intermediate density lipoproteins (IDL) but shows a preferential binding to high-density lipoproteins (HDL). It also binds a wide range of cellular receptors including the LDL receptor/LDLR and the very low-density lipoprotein receptor/VLDLR that mediate the cellular uptake of the APOE-containing lipoprotein particles. Finally, APOE also has a heparin-binding activity and binds heparan-sulfate proteoglycans on the surface of cells, a property that supports the capture and the receptor-mediated uptake of APOE-containing lipoproteins by cells. The polypeptide is Apolipoprotein E (APOE) (Capra hircus aegagrus (Wild goat)).